A 250-amino-acid polypeptide reads, in one-letter code: Pyrroloquinoline-quinone synthase (250 aa).

Belongs to the PqqC family.

The enzyme catalyses 6-(2-amino-2-carboxyethyl)-7,8-dioxo-1,2,3,4,7,8-hexahydroquinoline-2,4-dicarboxylate + 3 O2 = pyrroloquinoline quinone + 2 H2O2 + 2 H2O + H(+). It functions in the pathway cofactor biosynthesis; pyrroloquinoline quinone biosynthesis. Ring cyclization and eight-electron oxidation of 3a-(2-amino-2-carboxyethyl)-4,5-dioxo-4,5,6,7,8,9-hexahydroquinoline-7,9-dicarboxylic-acid to PQQ. This Pseudomonas aeruginosa (strain LESB58) protein is Pyrroloquinoline-quinone synthase.